Reading from the N-terminus, the 327-residue chain is Fructose-1,6-bisphosphatase class 1 (327 aa).

Mg(2+)-binding residues include Glu-84, Asp-103, Leu-105, and Asp-106. Residues 106–109 (DGSS), Asn-197, and Lys-263 each bind substrate. Glu-269 is a binding site for Mg(2+).

Belongs to the FBPase class 1 family. Homotetramer. Mg(2+) is required as a cofactor.

It is found in the cytoplasm. It catalyses the reaction beta-D-fructose 1,6-bisphosphate + H2O = beta-D-fructose 6-phosphate + phosphate. It participates in carbohydrate biosynthesis; gluconeogenesis. The protein is Fructose-1,6-bisphosphatase class 1 of Idiomarina loihiensis (strain ATCC BAA-735 / DSM 15497 / L2-TR).